The chain runs to 134 residues: Large-conductance mechanosensitive channel (134 aa).

2 helical membrane passes run 16 to 36 (VIDLAVAVVIGAAFGKIVTAL) and 81 to 101 (GDFINTILQFIIIAFAIFIIV).

This sequence belongs to the MscL family. In terms of assembly, homopentamer.

It is found in the cell inner membrane. Its function is as follows. Channel that opens in response to stretch forces in the membrane lipid bilayer. May participate in the regulation of osmotic pressure changes within the cell. The protein is Large-conductance mechanosensitive channel of Xylella fastidiosa (strain Temecula1 / ATCC 700964).